The chain runs to 334 residues: Immune-associated nucleotide-binding protein 3 (334 aa).

Residues 11–219 (KAVKNIVLVG…FRGKMYLEIK (209 aa)) form the AIG1-type G domain. Residues 20-27 (GRTGNGKS) form a G1 region. Residues 20-28 (GRTGNGKSA) and Ser41 each bind GTP. The tract at residues 47 to 51 (GVTKT) is G2. Residues 69-72 (DTPG) form a G3 region. The interval 139–142 (TGGD) is G4. Residues 178–180 (NNM) form a G5 region. Asn179 serves as a coordination point for GTP. Residues 272 to 306 (SAAHERMVSMLNENLENAHRENIDLRKAHDHEQKK) adopt a coiled-coil conformation.

Belongs to the TRAFAC class TrmE-Era-EngA-EngB-Septin-like GTPase superfamily. AIG1/Toc34/Toc159-like paraseptin GTPase family. IAN subfamily. As to expression, mostly expressed in pollen. Also detected in lateral roots and radicles.

The protein is Immune-associated nucleotide-binding protein 3 of Arabidopsis thaliana (Mouse-ear cress).